A 407-amino-acid polypeptide reads, in one-letter code: Na(+)-translocating NADH-quinone reductase subunit F (407 aa).

Residues Ile-3 to Phe-23 form a helical membrane-spanning segment. One can recognise a 2Fe-2S ferredoxin-type domain in the interval Gly-32–Val-126. The [2Fe-2S] cluster site is built by Cys-69, Cys-75, Cys-78, and Cys-110. Residues Val-129–Lys-269 form the FAD-binding FR-type domain. Positions Asp-272 to Met-389 are catalytic.

It belongs to the NqrF family. As to quaternary structure, composed of six subunits; NqrA, NqrB, NqrC, NqrD, NqrE and NqrF. The cofactor is [2Fe-2S] cluster. FAD is required as a cofactor.

The protein resides in the cell inner membrane. It carries out the reaction a ubiquinone + n Na(+)(in) + NADH + H(+) = a ubiquinol + n Na(+)(out) + NAD(+). NQR complex catalyzes the reduction of ubiquinone-1 to ubiquinol by two successive reactions, coupled with the transport of Na(+) ions from the cytoplasm to the periplasm. The first step is catalyzed by NqrF, which accepts electrons from NADH and reduces ubiquinone-1 to ubisemiquinone by a one-electron transfer pathway. This chain is Na(+)-translocating NADH-quinone reductase subunit F, found in Pasteurella multocida (strain Pm70).